A 498-amino-acid polypeptide reads, in one-letter code: Dynein regulatory complex subunit 2 (498 aa).

3 coiled-coil regions span residues 98–160 (VIKS…RKTI), 250–311 (KDEK…KAQR), and 417–441 (SLRHRRAQLLEINEKLREMLRQYLD).

Belongs to the DRC2 family. As to quaternary structure, component of the nexin-dynein regulatory complex (N-DRC). Interacts with DRC1.

Its subcellular location is the cytoplasm. It localises to the cytoskeleton. The protein localises to the flagellum basal body. It is found in the cell projection. The protein resides in the cilium. Its subcellular location is the flagellum. It localises to the flagellum axoneme. Its function is as follows. Component of the nexin-dynein regulatory complex (N-DRC), a key regulator of ciliary/flagellar motility which maintains the alignment and integrity of the distal axoneme and regulates microtubule sliding in motile axonemes. Plays a critical role in the assembly of N-DRC and also stabilizes the assembly of multiple inner dynein arms and radial spokes. Coassembles with DRC1 to form a central scaffold needed for assembly of the N-DRC and its attachment to the outer doublet microtubules. This chain is Dynein regulatory complex subunit 2 (CCDC65), found in Bos taurus (Bovine).